Here is a 402-residue protein sequence, read N- to C-terminus: Argininosuccinate synthase (402 aa).

7-15 contributes to the ATP binding site; that stretch reads LYSGGLDTS. Tyr-83 contributes to the L-citrulline binding site. Gly-113 is an ATP binding site. Thr-115, Asn-119, and Asp-120 together coordinate L-aspartate. L-citrulline is bound at residue Asn-119. Arg-123, Ser-169, Ser-178, Glu-253, and Tyr-265 together coordinate L-citrulline.

The protein belongs to the argininosuccinate synthase family. Type 1 subfamily. As to quaternary structure, homotetramer.

It localises to the cytoplasm. The enzyme catalyses L-citrulline + L-aspartate + ATP = 2-(N(omega)-L-arginino)succinate + AMP + diphosphate + H(+). Its pathway is amino-acid biosynthesis; L-arginine biosynthesis; L-arginine from L-ornithine and carbamoyl phosphate: step 2/3. The polypeptide is Argininosuccinate synthase (Thermoplasma acidophilum (strain ATCC 25905 / DSM 1728 / JCM 9062 / NBRC 15155 / AMRC-C165)).